The chain runs to 401 residues: Probable tRNA sulfurtransferase (401 aa).

Residues 60–165 form the THUMP domain; sequence EPIIDKLKTV…QDGTYVTCHD (106 aa). Residues 183-184, 208-209, Arg265, Gly287, and Gln296 contribute to the ATP site; these read ML and HF.

The protein belongs to the ThiI family.

It is found in the cytoplasm. The catalysed reaction is [ThiI sulfur-carrier protein]-S-sulfanyl-L-cysteine + a uridine in tRNA + 2 reduced [2Fe-2S]-[ferredoxin] + ATP + H(+) = [ThiI sulfur-carrier protein]-L-cysteine + a 4-thiouridine in tRNA + 2 oxidized [2Fe-2S]-[ferredoxin] + AMP + diphosphate. The enzyme catalyses [ThiS sulfur-carrier protein]-C-terminal Gly-Gly-AMP + S-sulfanyl-L-cysteinyl-[cysteine desulfurase] + AH2 = [ThiS sulfur-carrier protein]-C-terminal-Gly-aminoethanethioate + L-cysteinyl-[cysteine desulfurase] + A + AMP + 2 H(+). Its pathway is cofactor biosynthesis; thiamine diphosphate biosynthesis. In terms of biological role, catalyzes the ATP-dependent transfer of a sulfur to tRNA to produce 4-thiouridine in position 8 of tRNAs, which functions as a near-UV photosensor. Also catalyzes the transfer of sulfur to the sulfur carrier protein ThiS, forming ThiS-thiocarboxylate. This is a step in the synthesis of thiazole, in the thiamine biosynthesis pathway. The sulfur is donated as persulfide by IscS. In Geobacillus thermodenitrificans (strain NG80-2), this protein is Probable tRNA sulfurtransferase.